Consider the following 468-residue polypeptide: Methylenetetrahydrofolate--tRNA-(uracil-5-)-methyltransferase TrmFO (468 aa).

13–18 (GGGLAG) contributes to the FAD binding site.

The protein belongs to the MnmG family. TrmFO subfamily. FAD serves as cofactor.

Its subcellular location is the cytoplasm. It carries out the reaction uridine(54) in tRNA + (6R)-5,10-methylene-5,6,7,8-tetrahydrofolate + NADH + H(+) = 5-methyluridine(54) in tRNA + (6S)-5,6,7,8-tetrahydrofolate + NAD(+). The catalysed reaction is uridine(54) in tRNA + (6R)-5,10-methylene-5,6,7,8-tetrahydrofolate + NADPH + H(+) = 5-methyluridine(54) in tRNA + (6S)-5,6,7,8-tetrahydrofolate + NADP(+). Catalyzes the folate-dependent formation of 5-methyl-uridine at position 54 (M-5-U54) in all tRNAs. This is Methylenetetrahydrofolate--tRNA-(uracil-5-)-methyltransferase TrmFO from Bartonella henselae (strain ATCC 49882 / DSM 28221 / CCUG 30454 / Houston 1) (Rochalimaea henselae).